The chain runs to 142 residues: Small ribosomal subunit protein uS12 (142 aa).

The protein belongs to the universal ribosomal protein uS12 family. As to quaternary structure, part of the 30S ribosomal subunit.

Functionally, with S4 and S5 plays an important role in translational accuracy. Located at the interface of the 30S and 50S subunits. The protein is Small ribosomal subunit protein uS12 of Methanoregula boonei (strain DSM 21154 / JCM 14090 / 6A8).